A 317-amino-acid chain; its full sequence is Acetyl-coenzyme A carboxylase carboxyl transferase subunit alpha (317 aa).

The CoA carboxyltransferase C-terminal domain occupies 40 to 293; that stretch reads LEGRVRDAMV…EAVIGDALKE (254 aa).

The protein belongs to the AccA family. Acetyl-CoA carboxylase is a heterohexamer composed of biotin carboxyl carrier protein (AccB), biotin carboxylase (AccC) and two subunits each of ACCase subunit alpha (AccA) and ACCase subunit beta (AccD).

It localises to the cytoplasm. The enzyme catalyses N(6)-carboxybiotinyl-L-lysyl-[protein] + acetyl-CoA = N(6)-biotinyl-L-lysyl-[protein] + malonyl-CoA. It functions in the pathway lipid metabolism; malonyl-CoA biosynthesis; malonyl-CoA from acetyl-CoA: step 1/1. In terms of biological role, component of the acetyl coenzyme A carboxylase (ACC) complex. First, biotin carboxylase catalyzes the carboxylation of biotin on its carrier protein (BCCP) and then the CO(2) group is transferred by the carboxyltransferase to acetyl-CoA to form malonyl-CoA. The chain is Acetyl-coenzyme A carboxylase carboxyl transferase subunit alpha from Sinorhizobium medicae (strain WSM419) (Ensifer medicae).